Consider the following 416-residue polypeptide: Thyroid hormone receptor alpha-A (416 aa).

A compositionally biased stretch (polar residues) spans 1–13 (MEPMSNKQDSNSS). The tract at residues 1 to 37 (MEPMSNKQDSNSSEGDEKGWPDVPKRKRKNSQCSMKS) is disordered. The interval 1 to 58 (MEPMSNKQDSNSSEGDEKGWPDVPKRKRKNSQCSMKSMSALSVSVPGYIPSYLEKDEP) is modulating. Positions 15–24 (GDEKGWPDVP) are enriched in basic and acidic residues. 2 NR C4-type zinc fingers span residues 59-79 (CVVCGDKATGYHYRCITCEGC) and 97-121 (CKYEGCCIIDKITRNQCQLCRFKKC). A DNA-binding region (nuclear receptor) is located at residues 59–126 (CVVCGDKATG…RFKKCISVGM (68 aa)). The region spanning 169-413 (AEWELIRMAT…PPLFLEVFED (245 aa)) is the NR LBD domain.

It belongs to the nuclear hormone receptor family. NR1 subfamily.

The protein resides in the nucleus. High affinity receptor for triiodothyronine. The sequence is that of Thyroid hormone receptor alpha-A (thra1) from Paralichthys olivaceus (Bastard halibut).